The chain runs to 151 residues: Ubiquitin-conjugating enzyme E2 N (151 aa).

The region spanning 3–149 (SLPRRIIKET…AREWTQKYAV (147 aa)) is the UBC core domain. Residue cysteine 87 is the Glycyl thioester intermediate of the active site.

The protein belongs to the ubiquitin-conjugating enzyme family.

It carries out the reaction S-ubiquitinyl-[E1 ubiquitin-activating enzyme]-L-cysteine + [E2 ubiquitin-conjugating enzyme]-L-cysteine = [E1 ubiquitin-activating enzyme]-L-cysteine + S-ubiquitinyl-[E2 ubiquitin-conjugating enzyme]-L-cysteine.. Its pathway is protein modification; protein ubiquitination. In terms of biological role, catalyzes the covalent attachment of ubiquitin to other proteins. This chain is Ubiquitin-conjugating enzyme E2 N (ben), found in Drosophila melanogaster (Fruit fly).